Reading from the N-terminus, the 409-residue chain is Nucleoprotein (409 aa).

4 disordered regions span residues 1–32 (MASG…SSGN), 46–68 (IPPP…SQQH), 164–196 (RSGR…EDDL), and 238–258 (VDQV…DDKM). The span at 15–31 (PVIKLGGPKPPKVGSSG) shows a compositional bias: low complexity. Positions 29–160 (SSGNASWFQA…GNFRWDFIPL (132 aa)) are RNA-binding. Positions 31 to 156 (GNASWFQAIK…GGPDGNFRWD (126 aa)) constitute a CoV N NTD domain. Low complexity predominate over residues 166-179 (GRSTAASSAASSRA). 2 stretches are compositionally biased toward basic and acidic residues: residues 180 to 192 (PSRE…RSGS) and 247 to 258 (KGKEGNFGDDKM). A phosphoserine; by host mark is found at Ser190 and Ser192. The CoV N CTD domain occupies 215-331 (TKAKADEMAH…QCVDGVGTRP (117 aa)). The interval 226–333 (RYCKRTIPPN…VDGVGTRPKD (108 aa)) is dimerization. A disulfide bridge connects residues Cys320 and Cys323. The interval 326–409 (GVGTRPKDDE…GDAALGENEL (84 aa)) is disordered. Positions 358-367 (QRPKKEKKPK) are enriched in basic residues. Positions 368–384 (KHDDEVDKALTSDEERN) are enriched in basic and acidic residues. At Thr378 the chain carries Phosphothreonine; by host. A Phosphoserine; by host modification is found at Ser379.

It belongs to the gammacoronavirus nucleocapsid protein family. As to quaternary structure, homooligomer. Both monomeric and oligomeric forms interact with RNA. Interacts with protein M. Interacts with NSP3; this interaction serves to tether the genome to the newly translated replicase-transcriptase complex at a very early stage of infection. ADP-ribosylated. The ADP-ribosylation is retained in the virion during infection. In terms of processing, phosphorylated on serine and threonine residues.

It localises to the virion. Its subcellular location is the host endoplasmic reticulum-Golgi intermediate compartment. It is found in the host Golgi apparatus. In terms of biological role, packages the positive strand viral genome RNA into a helical ribonucleocapsid (RNP) and plays a fundamental role during virion assembly through its interactions with the viral genome and membrane protein M. Plays an important role in enhancing the efficiency of subgenomic viral RNA transcription as well as viral replication. This chain is Nucleoprotein, found in Avian infectious bronchitis virus (strain M41) (IBV).